A 220-amino-acid chain; its full sequence is Ribonuclease P protein subunit p29 (220 aa).

A Phosphoserine modification is found at Ser-10.

It belongs to the eukaryotic/archaeal RNase P protein component 1 family. As to quaternary structure, component of nuclear RNase P and RNase MRP ribonucleoproteins. RNase P consists of a catalytic RNA moiety and 10 different protein chains; POP1, POP4, POP5, POP7, RPP14, RPP21, RPP25, RPP30, RPP38 and RPP40. Within the RNase P complex, POP1, POP7 and RPP25 form the 'finger' subcomplex, POP5, RPP14, RPP40 and homodimeric RPP30 form the 'palm' subcomplex, and RPP21, POP4 and RPP38 form the 'wrist' subcomplex. All subunits of the RNase P complex interact with the catalytic RNA. Several subunits of RNase P are also part of the RNase MRP complex. RNase MRP consists of a catalytic RNA moiety and about 8 protein subunits; POP1, POP7, RPP25, RPP30, RPP38, RPP40 and possibly also POP4 and POP5.

The protein resides in the nucleus. It is found in the nucleolus. Functionally, component of ribonuclease P, a ribonucleoprotein complex that generates mature tRNA molecules by cleaving their 5'-ends. The protein is Ribonuclease P protein subunit p29 (POP4) of Pongo abelii (Sumatran orangutan).